We begin with the raw amino-acid sequence, 536 residues long: Phosphoenolpyruvate carboxykinase (ATP) (536 aa).

Residues Arg61, Tyr195, and Lys201 each contribute to the substrate site. ATP contacts are provided by residues Lys201, His220, and 236–244 (GLSGTGKTT). Mn(2+) contacts are provided by Lys201 and His220. Asp257 is a Mn(2+) binding site. Residues Glu285, Arg322, and Thr447 each coordinate ATP. Residue Arg322 coordinates substrate.

The protein belongs to the phosphoenolpyruvate carboxykinase (ATP) family. Requires Mn(2+) as cofactor.

The protein localises to the cytoplasm. It catalyses the reaction oxaloacetate + ATP = phosphoenolpyruvate + ADP + CO2. It participates in carbohydrate biosynthesis; gluconeogenesis. Its function is as follows. Involved in the gluconeogenesis. Catalyzes the conversion of oxaloacetate (OAA) to phosphoenolpyruvate (PEP) through direct phosphoryl transfer between the nucleoside triphosphate and OAA. The chain is Phosphoenolpyruvate carboxykinase (ATP) from Chelativorans sp. (strain BNC1).